Here is an 89-residue protein sequence, read N- to C-terminus: Small ribosomal subunit protein uS15 (89 aa).

This sequence belongs to the universal ribosomal protein uS15 family. In terms of assembly, part of the 30S ribosomal subunit. Forms a bridge to the 50S subunit in the 70S ribosome, contacting the 23S rRNA.

Its function is as follows. One of the primary rRNA binding proteins, it binds directly to 16S rRNA where it helps nucleate assembly of the platform of the 30S subunit by binding and bridging several RNA helices of the 16S rRNA. Forms an intersubunit bridge (bridge B4) with the 23S rRNA of the 50S subunit in the ribosome. This is Small ribosomal subunit protein uS15 from Parabacteroides distasonis (strain ATCC 8503 / DSM 20701 / CIP 104284 / JCM 5825 / NCTC 11152).